Here is a 483-residue protein sequence, read N- to C-terminus: Proton-coupled amino acid transporter 2 (483 aa).

Residues 1–58 (MSVTKSTEGPQGAVAIKLDLMSPPESAKKLENKDSTFLDESPSESAGLKKTKGITVFQ) are Cytoplasmic-facing. Over residues 26–36 (SAKKLENKDST) the composition is skewed to basic and acidic residues. The segment at 26–46 (SAKKLENKDSTFLDESPSESA) is disordered. The chain crosses the membrane as a helical span at residues 59–79 (ALIHLVKGNMGTGILGLPLAV). The Extracellular portion of the chain corresponds to 80-81 (KN). A helical membrane pass occupies residues 82–102 (AGILMGPLSLLVMGFIACHCM). At 103–148 (HILVKCAQRFCKRLNKPFMDYGDTVMHGLEANPNAWLQNHAHWGRH) the chain is on the cytoplasmic side. A helical transmembrane segment spans residues 149 to 169 (IVSFFLIITQLGFCCVYIVFL). At 170 to 197 (ADNLKQVVEAVNSTTNNCYSNETVILTP) the chain is on the extracellular side. Residues 198–218 (TMDSRLYMLSFLPFLVLLVLI) form a helical membrane-spanning segment. Residues 219-222 (RNLR) lie on the Cytoplasmic side of the membrane. A helical transmembrane segment spans residues 223–243 (ILTIFSMLANISMLVSLVIII). Over 244–264 (QYITQEIPDPSRLPLVASWKT) the chain is Extracellular. The chain crosses the membrane as a helical span at residues 265 to 285 (YPLFFGTAIFSFESIGVVLPL). Topologically, residues 286–296 (ENKMKNARHFP) are cytoplasmic. A helical transmembrane segment spans residues 297 to 317 (AILSLGMSIVTSLYIGMAALG). Residues 318 to 349 (YLRFGDDIKASISLNLPNCWLYQSVKLLYIAG) are Extracellular-facing. The chain crosses the membrane as a helical span at residues 350 to 370 (ILCTYALQFYVPAEIIIPFAI). The Cytoplasmic segment spans residues 371–379 (SRVSTRWAL). The chain crosses the membrane as a helical span at residues 380-400 (PLDLSIRLVMVCLTCLLAILI). Over 401-404 (PRLD) the chain is Extracellular. Residues 405–425 (LVISLVGSVSGTALALIIPPL) form a helical membrane-spanning segment. The Cytoplasmic portion of the chain corresponds to 426–437 (LEVTTFYSEGMS). Residues 438-458 (PLTIFKDALISILGFVGFVVG) form a helical membrane-spanning segment. At 459–483 (TYQALDELLKSEDSHPFSNSTTFVR) the chain is on the extracellular side.

Belongs to the amino acid/polyamine transporter 2 family. As to expression, abundantly expressed in kidney and muscle. Expressed in the S1 segment of the proximal tubule close to the glomerulus.

The protein localises to the cell membrane. It localises to the endoplasmic reticulum membrane. The protein resides in the recycling endosome membrane. It carries out the reaction glycine(in) + H(+)(in) = glycine(out) + H(+)(out). It catalyses the reaction L-alanine(in) + H(+)(in) = L-alanine(out) + H(+)(out). The catalysed reaction is D-alanine(in) + H(+)(in) = D-alanine(out) + H(+)(out). The enzyme catalyses L-proline(out) + H(+)(out) = L-proline(in) + H(+)(in). It carries out the reaction D-proline(out) + H(+)(out) = D-proline(in) + H(+)(in). It catalyses the reaction 4-hydroxy-L-proline(in) + H(+)(in) = 4-hydroxy-L-proline(out) + H(+)(out). The catalysed reaction is L-serine(in) + H(+)(in) = L-serine(out) + H(+)(out). The enzyme catalyses D-serine(out) + H(+)(out) = D-serine(in) + H(+)(in). It carries out the reaction beta-alanine(in) + H(+)(in) = beta-alanine(out) + H(+)(out). It catalyses the reaction 4-aminobutanoate(in) + H(+)(in) = 4-aminobutanoate(out) + H(+)(out). The catalysed reaction is sarcosine(in) + H(+)(in) = sarcosine(out) + H(+)(out). The enzyme catalyses N,N-dimethylglycine(in) + H(+)(in) = N,N-dimethylglycine(out) + H(+)(out). Electrogenic proton/amino acid symporter with a high selectivity for the small side chains amino acids glycine, alanine and proline, where both L- and D-enantiomers are transported. Extension of the backbone length, as in beta-alanine and 4-aminobutanoate or methylation of the amino group, as in sarcosine and N,N-dimethylglycine, are also tolerated but decrease transport efficiency. A free carboxyl group is preferred. In Homo sapiens (Human), this protein is Proton-coupled amino acid transporter 2.